We begin with the raw amino-acid sequence, 156 residues long: SsrA-binding protein (156 aa).

The tract at residues Y134–R156 is disordered.

Belongs to the SmpB family.

It localises to the cytoplasm. Its function is as follows. Required for rescue of stalled ribosomes mediated by trans-translation. Binds to transfer-messenger RNA (tmRNA), required for stable association of tmRNA with ribosomes. tmRNA and SmpB together mimic tRNA shape, replacing the anticodon stem-loop with SmpB. tmRNA is encoded by the ssrA gene; the 2 termini fold to resemble tRNA(Ala) and it encodes a 'tag peptide', a short internal open reading frame. During trans-translation Ala-aminoacylated tmRNA acts like a tRNA, entering the A-site of stalled ribosomes, displacing the stalled mRNA. The ribosome then switches to translate the ORF on the tmRNA; the nascent peptide is terminated with the 'tag peptide' encoded by the tmRNA and targeted for degradation. The ribosome is freed to recommence translation, which seems to be the essential function of trans-translation. This chain is SsrA-binding protein, found in Latilactobacillus sakei subsp. sakei (strain 23K) (Lactobacillus sakei subsp. sakei).